Reading from the N-terminus, the 78-residue chain is Conotoxin CaFr179 (78 aa).

Residues 1-19 (MSGLGIMVLTLLLLVFMEA) form the signal peptide. Residues 20–44 (SHQDAGEKQATQRDAINVRRRRSLA) constitute a propeptide that is removed on maturation. 3 disulfide bridges follow: C52–C64, C56–C72, and C63–C76. F77 is subject to Phenylalanine amide.

Belongs to the conotoxin O3 superfamily. Expressed by the venom duct.

It localises to the secreted. The polypeptide is Conotoxin CaFr179 (Conus caracteristicus (Characteristic cone)).